The primary structure comprises 635 residues: Chaperone protein HtpG (635 aa).

Residues 1-344 (MSETATTNKE…SNDLPLNVSR (344 aa)) are a; substrate-binding. Residues 345–561 (EILQDNKITQ…DYEMGTQMAK (217 aa)) form a b region. Positions 562 to 635 (LLAAAGQPVP…AVNQLLAPSH (74 aa)) are c.

Belongs to the heat shock protein 90 family. As to quaternary structure, homodimer.

It is found in the cytoplasm. Functionally, molecular chaperone. Has ATPase activity. The sequence is that of Chaperone protein HtpG from Vibrio cholerae serotype O1 (strain ATCC 39541 / Classical Ogawa 395 / O395).